The following is a 101-amino-acid chain: Enhancer of yellow 2 transcription factor (101 aa).

This sequence belongs to the ENY2 family. In terms of assembly, component of the nuclear pore complex (NPC)-associated AMEX complex (anchoring and mRNA export complex), composed of at least e(y)2 and xmas-2. Component of the SAGA transcription coactivator-HAT complexes, at least composed of Ada2b, e(y)2, Pcaf/Gcn5, Taf10 and Nipped-A/Trrap. Within the SAGA complex, e(y)2, Sgf11, and not/nonstop form an additional subcomplex of SAGA called the DUB module (deubiquitination module). Component of the THO complex, composed of at least e(y)2, HPR1, THO2, THOC5, THOC6 and THOC7. Interacts with e(y)1. Interacts with su(Hw) (via zinc fingers). Interacts with xmas-2; required for localization to the nuclear periphery. Interacts with the nuclear pore complex (NPC).

The protein resides in the nucleus. The protein localises to the nucleoplasm. It localises to the cytoplasm. Functionally, involved in mRNA export coupled transcription activation by association with both the AMEX and the SAGA complexes. The SAGA complex is a multiprotein complex that activates transcription by remodeling chromatin and mediating histone acetylation and deubiquitination. Within the SAGA complex, participates in a subcomplex that specifically deubiquitinates histone H2B. The SAGA complex is recruited to specific gene promoters by activators, where it is required for transcription. Required for nuclear receptor-mediated transactivation. Involved in transcription elongation by recruiting the THO complex onto nascent mRNA. The AMEX complex functions in docking export-competent ribonucleoprotein particles (mRNPs) to the nuclear entrance of the nuclear pore complex (nuclear basket). AMEX participates in mRNA export and accurate chromatin positioning in the nucleus by tethering genes to the nuclear periphery. The protein is Enhancer of yellow 2 transcription factor of Drosophila erecta (Fruit fly).